The sequence spans 265 residues: Phosphate import ATP-binding protein PstB 2 (265 aa).

Residues 13–260 (FRTENLNVYY…PTKQATRDYV (248 aa)) enclose the ABC transporter domain. Position 45–52 (45–52 (GPSGCGKS)) interacts with ATP.

This sequence belongs to the ABC transporter superfamily. Phosphate importer (TC 3.A.1.7) family. As to quaternary structure, the complex is composed of two ATP-binding proteins (PstB), two transmembrane proteins (PstC and PstA) and a solute-binding protein (PstS).

It localises to the cell inner membrane. The enzyme catalyses phosphate(out) + ATP + H2O = ADP + 2 phosphate(in) + H(+). Its function is as follows. Part of the ABC transporter complex PstSACB involved in phosphate import. Responsible for energy coupling to the transport system. The protein is Phosphate import ATP-binding protein PstB 2 of Synechococcus sp. (strain JA-3-3Ab) (Cyanobacteria bacterium Yellowstone A-Prime).